The following is a 488-amino-acid chain: Probable phenylalanine--tRNA ligase alpha subunit (488 aa).

Residues 1-146 (MSIEQDILNL…KRKLVDINKK (146 aa)) form a contains the major tRNA-Phe binding sites region. L-phenylalanine is bound by residues Thr315, 363 to 365 (QVE), and Tyr403. Residue Glu405 participates in Mg(2+) binding. Phe429 contacts L-phenylalanine.

This sequence belongs to the class-II aminoacyl-tRNA synthetase family. Phe-tRNA synthetase alpha subunit type 2 subfamily. Tetramer of two alpha and two beta subunits. It depends on Mg(2+) as a cofactor.

It localises to the cytoplasm. It carries out the reaction tRNA(Phe) + L-phenylalanine + ATP = L-phenylalanyl-tRNA(Phe) + AMP + diphosphate + H(+). The sequence is that of Probable phenylalanine--tRNA ligase alpha subunit from Enterocytozoon bieneusi (strain H348) (Microsporidian parasite).